Consider the following 136-residue polypeptide: Probable flagellum biosynthesis repressor protein FlbT 2 (136 aa).

It belongs to the FlbT family.

In terms of biological role, has a post-transcriptional repressor function in flagellum biogenesis. Associates with the 5'-UTR of fljK mRNA and promotes its degradation. This is Probable flagellum biosynthesis repressor protein FlbT 2 from Bradyrhizobium diazoefficiens (strain JCM 10833 / BCRC 13528 / IAM 13628 / NBRC 14792 / USDA 110).